The sequence spans 477 residues: Putative BTB/POZ domain-containing protein R830 (477 aa).

One can recognise a BTB domain in the interval 13 to 83 (SDLELILVDK…FYGIETNNDP (71 aa)).

This sequence belongs to the mimivirus BTB/WD family.

The polypeptide is Putative BTB/POZ domain-containing protein R830 (Acanthamoeba polyphaga mimivirus (APMV)).